A 413-amino-acid polypeptide reads, in one-letter code: Multifunctional CCA protein (413 aa).

Residues G8 and R11 each contribute to the ATP site. Positions 8 and 11 each coordinate CTP. The Mg(2+) site is built by D21 and D23. The ATP site is built by R91, R143, and R146. Positions 91, 143, and 146 each coordinate CTP. The region spanning 232 to 333 is the HD domain; sequence TGVHVMMVVD…VRLFERSDAL (102 aa).

This sequence belongs to the tRNA nucleotidyltransferase/poly(A) polymerase family. Bacterial CCA-adding enzyme type 1 subfamily. As to quaternary structure, monomer. Can also form homodimers and oligomers. It depends on Mg(2+) as a cofactor. Requires Ni(2+) as cofactor.

The catalysed reaction is a tRNA precursor + 2 CTP + ATP = a tRNA with a 3' CCA end + 3 diphosphate. The enzyme catalyses a tRNA with a 3' CCA end + 2 CTP + ATP = a tRNA with a 3' CCACCA end + 3 diphosphate. Its function is as follows. Catalyzes the addition and repair of the essential 3'-terminal CCA sequence in tRNAs without using a nucleic acid template. Adds these three nucleotides in the order of C, C, and A to the tRNA nucleotide-73, using CTP and ATP as substrates and producing inorganic pyrophosphate. tRNA 3'-terminal CCA addition is required both for tRNA processing and repair. Also involved in tRNA surveillance by mediating tandem CCA addition to generate a CCACCA at the 3' terminus of unstable tRNAs. While stable tRNAs receive only 3'-terminal CCA, unstable tRNAs are marked with CCACCA and rapidly degraded. The polypeptide is Multifunctional CCA protein (Burkholderia cenocepacia (strain ATCC BAA-245 / DSM 16553 / LMG 16656 / NCTC 13227 / J2315 / CF5610) (Burkholderia cepacia (strain J2315))).